Reading from the N-terminus, the 563-residue chain is Arginine--tRNA ligase (563 aa).

The short motif at 121–131 (PNIAKPFSIGH) is the 'HIGH' region element.

Belongs to the class-I aminoacyl-tRNA synthetase family. As to quaternary structure, monomer.

It is found in the cytoplasm. The enzyme catalyses tRNA(Arg) + L-arginine + ATP = L-arginyl-tRNA(Arg) + AMP + diphosphate. This chain is Arginine--tRNA ligase, found in Streptococcus pneumoniae (strain CGSP14).